The chain runs to 125 residues: Alpha-endosulfine (125 aa).

Positions 1-37 (MSDKYIGDSHLEETGEEKQDSQEKEAVTPEKAEEQKL) are enriched in basic and acidic residues. Residues 1-52 (MSDKYIGDSHLEETGEEKQDSQEKEAVTPEKAEEQKLKAKYPNLGQKPGGSD) form a disordered region. Thr28 is subject to Phosphothreonine; by CDK2. A Phosphoserine; by GWL modification is found at Ser67. The tract at residues 86 to 107 (GPDKNLVTGDHIPTPQDLPQRK) is disordered. Phosphothreonine; by CDK2 is present on Thr99. Ser109 is subject to Phosphoserine; by PKA.

Belongs to the endosulfine family. In terms of assembly, interacts (when phosphorylated at Ser-67) with ppp2r2d. Post-translationally, phosphorylation at Ser-67 by gwl during mitosis is essential for interaction with PPP2R2D (PR55-delta) and subsequent inactivation of PP2A. Phosphorylated by PKA.

Its subcellular location is the cytoplasm. Its function is as follows. Protein phosphatase inhibitor that specifically inhibits protein phosphatase 2A (PP2A) during mitosis. When phosphorylated at Ser-67 during mitosis, specifically interacts with ppp2r2d (PR55-delta) and inhibits its activity, leading to inactivation of PP2A, an essential condition to keep cyclin-B1-CDK1 activity high during M phase. The polypeptide is Alpha-endosulfine (ensa) (Xenopus laevis (African clawed frog)).